A 380-amino-acid chain; its full sequence is 1-deoxy-D-xylulose 5-phosphate reductoisomerase (380 aa).

NADPH contacts are provided by serine 10, glycine 11, serine 12, isoleucine 13, glycine 36, lysine 37, asparagine 38, and asparagine 120. Lysine 121 is a binding site for 1-deoxy-D-xylulose 5-phosphate. NADPH is bound at residue glutamate 122. Residue aspartate 146 participates in Mn(2+) binding. 1-deoxy-D-xylulose 5-phosphate contacts are provided by serine 147, glutamate 148, serine 172, and histidine 195. Glutamate 148 contacts Mn(2+). Glycine 201 contacts NADPH. 1-deoxy-D-xylulose 5-phosphate is bound by residues serine 208, asparagine 213, lysine 214, and glutamate 217. Glutamate 217 serves as a coordination point for Mn(2+).

This sequence belongs to the DXR family. The cofactor is Mg(2+). It depends on Mn(2+) as a cofactor.

It carries out the reaction 2-C-methyl-D-erythritol 4-phosphate + NADP(+) = 1-deoxy-D-xylulose 5-phosphate + NADPH + H(+). It functions in the pathway isoprenoid biosynthesis; isopentenyl diphosphate biosynthesis via DXP pathway; isopentenyl diphosphate from 1-deoxy-D-xylulose 5-phosphate: step 1/6. Its function is as follows. Catalyzes the NADPH-dependent rearrangement and reduction of 1-deoxy-D-xylulose-5-phosphate (DXP) to 2-C-methyl-D-erythritol 4-phosphate (MEP). The protein is 1-deoxy-D-xylulose 5-phosphate reductoisomerase of Bacillus cereus (strain AH187).